We begin with the raw amino-acid sequence, 341 residues long: tRNA (cytidine(56)-2'-O)-methyltransferase (341 aa).

Residues Leu79 and 104–108 (GAEKV) contribute to the S-adenosyl-L-methionine site. The 108-residue stretch at 187–294 (IIRHVETVYK…VAHADNLVSM (108 aa)) folds into the HD domain.

It belongs to the aTrm56 family. Homodimer.

The protein resides in the cytoplasm. The enzyme catalyses cytidine(56) in tRNA + S-adenosyl-L-methionine = 2'-O-methylcytidine(56) in tRNA + S-adenosyl-L-homocysteine + H(+). In terms of biological role, specifically catalyzes the AdoMet-dependent 2'-O-ribose methylation of cytidine at position 56 in tRNAs. The protein is tRNA (cytidine(56)-2'-O)-methyltransferase of Picrophilus torridus (strain ATCC 700027 / DSM 9790 / JCM 10055 / NBRC 100828 / KAW 2/3).